The chain runs to 622 residues: Chaperone protein HscA homolog (622 aa).

It belongs to the heat shock protein 70 family.

Chaperone involved in the maturation of iron-sulfur cluster-containing proteins. Has a low intrinsic ATPase activity which is markedly stimulated by HscB. The chain is Chaperone protein HscA homolog from Aromatoleum aromaticum (strain DSM 19018 / LMG 30748 / EbN1) (Azoarcus sp. (strain EbN1)).